We begin with the raw amino-acid sequence, 250 residues long: uncharacterized protein (250 aa).

The protein to Synechocystis PCC 6803 sll0249.

This is an uncharacterized protein from Nostoc sp. (strain PCC 7120 / SAG 25.82 / UTEX 2576).